The following is a 513-amino-acid chain: ATP synthase subunit alpha (513 aa).

169-176 (GDRQTGKT) lines the ATP pocket.

Belongs to the ATPase alpha/beta chains family. In terms of assembly, F-type ATPases have 2 components, CF(1) - the catalytic core - and CF(0) - the membrane proton channel. CF(1) has five subunits: alpha(3), beta(3), gamma(1), delta(1), epsilon(1). CF(0) has three main subunits: a(1), b(2) and c(9-12). The alpha and beta chains form an alternating ring which encloses part of the gamma chain. CF(1) is attached to CF(0) by a central stalk formed by the gamma and epsilon chains, while a peripheral stalk is formed by the delta and b chains.

It localises to the cell inner membrane. It catalyses the reaction ATP + H2O + 4 H(+)(in) = ADP + phosphate + 5 H(+)(out). Its function is as follows. Produces ATP from ADP in the presence of a proton gradient across the membrane. The alpha chain is a regulatory subunit. The sequence is that of ATP synthase subunit alpha from Salmonella agona (strain SL483).